We begin with the raw amino-acid sequence, 273 residues long: Short-chain dehydrogenase fogB (273 aa).

NADP(+) contacts are provided by Ile-16, Asp-66, Arg-128, Tyr-174, Lys-178, Val-207, and Thr-209. Tyr-174 functions as the Proton donor in the catalytic mechanism. Catalysis depends on Lys-178, which acts as the Lowers pKa of active site Tyr.

The protein belongs to the short-chain dehydrogenases/reductases (SDR) family.

Functionally, short-chain dehydrogenase; part of the gene cluster that mediates the biosynthesis of flavoglaucin and congeners (including aspergin, dihydroauroglaucin and auroglaucin), prenylated salicylaldehyde derivatives carrying a saturated or an unsaturated C-7 side chain. The PKS fogA releases the carboxylic acid (8E,10E,12E)-3,5,7-trihydroxytetradeca-8,10,12-trienoic acid as its product, as well as derivatives with one and two double bonds. FogA is indeed able to reduce the initial triketide, thus being at least partially responsible for the differently saturated heptyl side chains of flavoglaucin congeners. The oxidoreductases fogB, fogC and fogD modify the nascent polyketide in fogA-bound form and, together, fogA, fogB, fogC and fogD are necessary for the formation of the aromatic core and the cyclized PKS products are released as salicyl alcohols. In particular, fogB is responsible for oxidation of a hydroxyl group or reduction of remaining double bond(s) at the C-7 residue whereas fogD is probably involved in the reductive release of the modified PKS products. The cytochrome P450 monooxygenase fogE is then responsible for the hydroxylation at C-3 of the benzene ring. The fogE products are substrates of the prenyltransferase fogH and the prenylated benzyl alcohols are subsequently oxidized by the fogF to produce the final aryl aldehydes flavoglaucin and congeners. The short-chain dehydrogenase fogG does not seem to be involved in the biosynthesis of the prenylated salicylaldehyde derivatives. The sequence is that of Short-chain dehydrogenase fogB from Aspergillus ruber (strain CBS 135680).